The following is a 307-amino-acid chain: MTKTGSKGGNLRDKLDGNELDLSLSDLNEVPVKELAALPKATVLDLSCNKLSTLPSDFCGLTHLVKLDLSKNKLQQLPADFGRLVNLQHLDLLNNRLVTLPVSFAQLKNLKWLDLKDNPLDPVLAKVAGDCLDEKQCKQCANKVLQHMKAVQADQERERQRRLEVEREAEKKREAKQQAKEAKERELRKREKAEEKERRRKEYDAQKASKREQEKKPKKETNQAPKSKSGSRPRKPPPRKHNRSWAVLKGLLLLLLLCVAGGLVVCRVTGLQQQPLCTSVNAIYDNAVQGLRHHEILQWVLQTDSQQ.

Met1 is subject to N-acetylmethionine. Thr2 is modified (N-acetylthreonine; in Leucine-rich repeat-containing protein 59, N-terminally processed). Residues 2-244 (TKTGSKGGNL…KPPPRKHNRS (243 aa)) are Cytoplasmic-facing. LRR repeat units lie at residues 10 to 31 (NLRD…NEVP), 40 to 62 (KATV…CGLT), 63 to 84 (HLVK…FGRL), 86 to 107 (NLQH…FAQL), and 109 to 128 (NLKW…AKVA). Ser23 and Ser25 each carry phosphoserine. Position 73 is an N6-succinyllysine (Lys73). Lys135 carries the post-translational modification N6-acetyllysine. Positions 148–216 (MKAVQADQER…KASKREQEKK (69 aa)) form a coiled coil. The segment at 150-242 (AVQADQERER…PRKPPPRKHN (93 aa)) is disordered. The segment covering 154–221 (DQERERQRRL…EQEKKPKKET (68 aa)) has biased composition (basic and acidic residues). Over residues 229-242 (SGSRPRKPPPRKHN) the composition is skewed to basic residues. The helical transmembrane segment at 245-265 (WAVLKGLLLLLLLCVAGGLVV) threads the bilayer. At 266–307 (CRVTGLQQQPLCTSVNAIYDNAVQGLRHHEILQWVLQTDSQQ) the chain is on the lumenal side.

Can form homodimers. Interacts with SGO1. Interacts with FGF1.

It is found in the microsome membrane. Its subcellular location is the endoplasmic reticulum membrane. It localises to the nucleus envelope. Its function is as follows. Required for nuclear import of FGF1, but not that of FGF2. Might regulate nuclear import of exogenous FGF1 by facilitating interaction with the nuclear import machinery and by transporting cytosolic FGF1 to, and possibly through, the nuclear pores. This Rattus norvegicus (Rat) protein is Leucine-rich repeat-containing protein 59 (Lrrc59).